The sequence spans 218 residues: DNA-directed RNA polymerases IV and V subunit 5B (218 aa).

This sequence belongs to the archaeal Rpo5/eukaryotic RPB5 RNA polymerase subunit family. Component of the RNA polymerase IV and V complexes. Interacts with NRPD1. In terms of tissue distribution, expressed inleaves, flower buds, flowers and siliques.

It localises to the nucleus. In terms of biological role, DNA-dependent RNA polymerase catalyzes the transcription of DNA into RNA using the four ribonucleoside triphosphates as substrates. Component of RNA polymerases IV and V which mediate short-interfering RNAs (siRNA) accumulation and subsequent RNA-directed DNA methylation-dependent (RdDM) transcriptional gene silencing (TGS) of endogenous repeated sequences, including transposable elements. The sequence is that of DNA-directed RNA polymerases IV and V subunit 5B (NRPD5B) from Arabidopsis thaliana (Mouse-ear cress).